The chain runs to 663 residues: 72 kDa type IV collagenase (663 aa).

The N-terminal stretch at 1 to 26 is a signal peptide; that stretch reads MKTHSVFGFFFKVLLIQVYLFNKTLA. A propeptide spans 27–106 (activation peptide); it reads APSPIIKFPG…PRCGNPDVAN (80 aa). The Cysteine switch motif lies at 97 to 104; that stretch reads PRCGNPDV. Position 99 (Cys-99) interacts with Zn(2+). The segment at 107-218 is collagenase-like 1; sequence YNFFPRKPKW…LWTLGEGQVV (112 aa). Ca(2+) is bound by residues Asp-131 and Asp-165. 2 residues coordinate Zn(2+): His-175 and Asp-177. Residues Asp-182 and Gly-183 each coordinate Ca(2+). Position 190 (His-190) interacts with Zn(2+). Residues Gly-197, Gly-199, and Asp-201 each contribute to the Ca(2+) site. Residue His-203 coordinates Zn(2+). Ca(2+)-binding residues include Asp-205, Asp-206, and Glu-208. The collagen-binding stretch occupies residues 219–393; the sequence is RVKYGNADGE…WGFCPDQGYS (175 aa). 3 consecutive Fibronectin type-II domains span residues 225-273, 283-331, and 341-389; these read ADGE…FCPH, GDGQ…FCPE, and SEGA…FCPD. 6 disulfides stabilise this stretch: Cys-230–Cys-256, Cys-244–Cys-271, Cys-288–Cys-314, Cys-302–Cys-329, Cys-346–Cys-372, and Cys-360–Cys-387. The collagenase-like 2 stretch occupies residues 394-468; the sequence is LFLVAAHEFG…GPRPTLGPVT (75 aa). His-400 lines the Zn(2+) pocket. Glu-401 is a catalytic residue. Residues His-404 and His-410 each coordinate Zn(2+). The disordered stretch occupies residues 445–464; sequence SPDVEPGPGPGPGPGPRPTL. The segment covering 449–463 has biased composition (pro residues); sequence EPGPGPGPGPGPRPT. A disulfide bridge links Cys-472 with Cys-663. 4 Hemopexin repeats span residues 475–519, 520–566, 568–616, and 617–663; these read DIVF…WPDL, PEKI…GLPP, VQRI…WNGV, and PDNL…WLGC. The Ca(2+) site is built by Asp-479, Asp-524, Asp-572, and Asp-621.

Belongs to the peptidase M10A family. In terms of assembly, ligand for integrin alpha-V/beta-3. Requires Ca(2+) as cofactor. It depends on Zn(2+) as a cofactor. The propeptide is processed by MMP14 (MT-MMP1) and MMP16 (MT-MMP3). As to expression, produced by normal skin fibroblasts.

It is found in the secreted. The protein resides in the extracellular space. It localises to the extracellular matrix. The catalysed reaction is Cleavage of gelatin type I and collagen types IV, V, VII, X. Cleaves the collagen-like sequence Pro-Gln-Gly-|-Ile-Ala-Gly-Gln.. This chain is 72 kDa type IV collagenase (MMP2), found in Gallus gallus (Chicken).